A 458-amino-acid chain; its full sequence is F-box/WD repeat-containing protein 9 (458 aa).

Met-1 carries the post-translational modification N-acetylmethionine. The disordered stretch occupies residues 1-28 (MELPPGPRDDPHAWDDDSDPELEPDTDA). Over residues 16-28 (DDSDPELEPDTDA) the composition is skewed to acidic residues. Phosphoserine occurs at positions 18 and 59. The F-box domain maps to 76-123 (VPGLLSLPPELLLEICAYLDARLVLHVLPRVCHALRDLVRDRVTWRLR). 7 WD repeats span residues 171 to 210 (GHFA…VEPS), 224 to 261 (THKG…QQFG), 264 to 301 (KGKA…ALLK), 305 to 342 (LHSS…VLQR), 344 to 381 (QLDS…FQLV), 387 to 424 (GHRS…RTIC), and 427 to 458 (SHHN…RLQA).

Interacts with SKP1 and CUL1.

Its function is as follows. Substrate-recognition component of the SCF (SKP1-CUL1-F-box protein)-type E3 ubiquitin ligase complex. The sequence is that of F-box/WD repeat-containing protein 9 (FBXW9) from Bos taurus (Bovine).